A 236-amino-acid polypeptide reads, in one-letter code: Purine nucleoside phosphorylase DeoD-type 1 (236 aa).

Histidine 5 serves as a coordination point for a purine D-ribonucleoside. Phosphate-binding positions include glycine 21, arginine 25, arginine 44, and 88–91 (RVGS). A purine D-ribonucleoside contacts are provided by residues 180–182 (EME) and 204–205 (TD). Aspartate 205 (proton donor) is an active-site residue.

Belongs to the PNP/UDP phosphorylase family. In terms of assembly, homohexamer; trimer of homodimers.

The enzyme catalyses a purine D-ribonucleoside + phosphate = a purine nucleobase + alpha-D-ribose 1-phosphate. The catalysed reaction is a purine 2'-deoxy-D-ribonucleoside + phosphate = a purine nucleobase + 2-deoxy-alpha-D-ribose 1-phosphate. Catalyzes the reversible phosphorolytic breakdown of the N-glycosidic bond in the beta-(deoxy)ribonucleoside molecules, with the formation of the corresponding free purine bases and pentose-1-phosphate. This Shewanella oneidensis (strain ATCC 700550 / JCM 31522 / CIP 106686 / LMG 19005 / NCIMB 14063 / MR-1) protein is Purine nucleoside phosphorylase DeoD-type 1.